Consider the following 313-residue polypeptide: MKLLMLCREPRLYSCQRLKEAAENSGHQMDILDPNRCLLKLSENSPHFELIYQATMEHEPSRLLNYDAVIPRFGSQSTKMGCAVLRHFEAQNIPCLNSATAFLQARDKWQSLQMLMAQGIAIPHSLLAGPEFQAPSTMQYVQSPTILKTLSGAQGIGVILAEKRQSAVSILETLKQADVSVLAQEFIEEANGADLRCFVIGERVVASMQRISQNGEFRANFHRGGLAEKVSLSEAEKTMAVKATKALGLDVAGVDLIRAKRGTLVLEVNASPGLEMIEKTSGIDIALQMIVHLEKKYQALQNVTKTIELRSHK.

The ATP-grasp domain maps to 112–294; it reads LQMLMAQGIA…IALQMIVHLE (183 aa). Residues K148, 185–186, D194, and 218–220 each bind ATP; these read EF and RAN. Mg(2+) contacts are provided by D255, E267, and N269. Mn(2+)-binding residues include D255, E267, and N269.

It belongs to the RimK family. Mg(2+) serves as cofactor. Requires Mn(2+) as cofactor.

The protein is Probable alpha-L-glutamate ligase of Pasteurella multocida (strain Pm70).